We begin with the raw amino-acid sequence, 336 residues long: Cytosolic Fe-S cluster assembly factor NBP35 (336 aa).

The disordered stretch occupies residues 1 to 20 (MIATQRPFPIPSPVPLAPSS). Residues C35, C49, C52, and C58 each contribute to the [4Fe-4S] cluster site. 88-95 (GKGGVGKS) serves as a coordination point for ATP. 2 residues coordinate [4Fe-4S] cluster: C261 and C264.

Belongs to the Mrp/NBP35 ATP-binding proteins family. NUBP1/NBP35 subfamily. Heterotetramer of 2 NBP35 and 2 CFD1 chains. The cofactor is [4Fe-4S] cluster.

Its subcellular location is the cytoplasm. Component of the cytosolic iron-sulfur (Fe/S) protein assembly (CIA) machinery. Required for maturation of extramitochondrial Fe-S proteins. The NBP35-CFD1 heterotetramer forms a Fe-S scaffold complex, mediating the de novo assembly of an Fe-S cluster and its transfer to target apoproteins. This chain is Cytosolic Fe-S cluster assembly factor NBP35, found in Cryptococcus neoformans var. neoformans serotype D (strain B-3501A) (Filobasidiella neoformans).